The primary structure comprises 174 residues: NADH-ubiquinone oxidoreductase chain 6 (174 aa).

4 consecutive transmembrane segments (helical) span residues 25-45, 48-68, 82-102, and 143-163; these read SMGLMLLIQTFLTCLITGIYV, FWFSYVLFLIFLGGMLILFIY, FKLTMFSLVLFSLSMVIFFIL, and LITLLLINYLFLTLLVTVKIT.

Belongs to the complex I subunit 6 family.

The protein localises to the mitochondrion membrane. The catalysed reaction is a ubiquinone + NADH + 5 H(+)(in) = a ubiquinol + NAD(+) + 4 H(+)(out). Functionally, core subunit of the mitochondrial membrane respiratory chain NADH dehydrogenase (Complex I) that is believed to belong to the minimal assembly required for catalysis. Complex I functions in the transfer of electrons from NADH to the respiratory chain. The immediate electron acceptor for the enzyme is believed to be ubiquinone. The protein is NADH-ubiquinone oxidoreductase chain 6 (mt:ND6) of Anopheles gambiae (African malaria mosquito).